Here is a 137-residue protein sequence, read N- to C-terminus: Fluoride-specific ion channel FluC 1 (137 aa).

4 helical membrane-spanning segments follow: residues 3–23, 42–62, 69–89, and 107–127; these read PLVVLAVAIAGGLGAVARLVL, INVTGSFVLGLVTALALGHGL, ILGTGFIGGYTTFSTASYEAV, and MMFLALGAAGLGLWLGGLAVA. Na(+) is bound by residues G76 and T79.

It belongs to the fluoride channel Fluc/FEX (TC 1.A.43) family.

The protein resides in the cell membrane. It carries out the reaction fluoride(in) = fluoride(out). Na(+) is not transported, but it plays an essential structural role and its presence is essential for fluoride channel function. Fluoride-specific ion channel. Important for reducing fluoride concentration in the cell, thus reducing its toxicity. This Leifsonia xyli subsp. xyli (strain CTCB07) protein is Fluoride-specific ion channel FluC 1.